Here is a 492-residue protein sequence, read N- to C-terminus: MTLWINGDWITGQGASRVKRNPVSGEVLWQGNDADAAQVEQACRAARAAFPRWARLSFAERHAVVERFAALLESNKAELTAIIARETGKPRWEAATEVTAMINKIAISIKAYHVRTGEQRSEMPDGAASLRHRPHGVLAVFGPYNFPGHLPNGHIVPALLAGNTIIFKPSELTPWSGEAVMRLWQQAGLPPGVLNLVQGGRETGQALSALEDLDGLLFTGSANTGYQLHRQLSGQPEKILALEMGGNNPLIIDEVADIDAAVHLTIQSAFVTAGQRCTCARRLLLKSGAQGDAFLARLVAVSQRLTPGNWDDEPQPFIGGLISEQAAQQVVTAWQQLEAMGGRPLLAPRLLQAGTSLLTPGIIEMTGVAGVPDEEVFGPLLRVWRYDTFDEAIRMANNTRFGLSCGLVSPEREKFDQLLLEARAGIVNWNKPLTGAASTAPFGGIGASGNHRPSAWYAADYCAWPMASLESDSLTLPATLNPGLDFSDEVVR.

220-225 (GSANTG) is a binding site for NAD(+). Active-site residues include E243 and C277.

It belongs to the aldehyde dehydrogenase family. AstD subfamily.

It carries out the reaction N-succinyl-L-glutamate 5-semialdehyde + NAD(+) + H2O = N-succinyl-L-glutamate + NADH + 2 H(+). It functions in the pathway amino-acid degradation; L-arginine degradation via AST pathway; L-glutamate and succinate from L-arginine: step 4/5. Catalyzes the NAD-dependent reduction of succinylglutamate semialdehyde into succinylglutamate. The protein is N-succinylglutamate 5-semialdehyde dehydrogenase of Escherichia coli (strain K12 / MC4100 / BW2952).